The sequence spans 193 residues: MDTIVIAGLGNPGSKYQWTRHNAGFLFLDRIAQLEGLSIVRKQFGGLTAEWERKGKRLVLLKPQTFMNLSGRSVMPALQFYKLKPDQLIVVHDEIDLALGAARLKQGGGHGGQNGLRSIMELLGKGDFVRLRLGIGRPPHGDVTNHVLGVFTPPEMEIFARVLDGALDMLETALDEGVPKAMSLFNNKSYLEG.

A tRNA-binding site is contributed by tyrosine 16. The Proton acceptor role is filled by histidine 21. Residues phenylalanine 66, asparagine 68, and asparagine 114 each contribute to the tRNA site.

It belongs to the PTH family. In terms of assembly, monomer.

Its subcellular location is the cytoplasm. It catalyses the reaction an N-acyl-L-alpha-aminoacyl-tRNA + H2O = an N-acyl-L-amino acid + a tRNA + H(+). In terms of biological role, hydrolyzes ribosome-free peptidyl-tRNAs (with 1 or more amino acids incorporated), which drop off the ribosome during protein synthesis, or as a result of ribosome stalling. Catalyzes the release of premature peptidyl moieties from peptidyl-tRNA molecules trapped in stalled 50S ribosomal subunits, and thus maintains levels of free tRNAs and 50S ribosomes. This is Peptidyl-tRNA hydrolase from Trichlorobacter lovleyi (strain ATCC BAA-1151 / DSM 17278 / SZ) (Geobacter lovleyi).